The following is a 340-amino-acid chain: Phosphoribosylformylglycinamidine cyclo-ligase (340 aa).

This sequence belongs to the AIR synthase family.

Its subcellular location is the cytoplasm. It catalyses the reaction 2-formamido-N(1)-(5-O-phospho-beta-D-ribosyl)acetamidine + ATP = 5-amino-1-(5-phospho-beta-D-ribosyl)imidazole + ADP + phosphate + H(+). It functions in the pathway purine metabolism; IMP biosynthesis via de novo pathway; 5-amino-1-(5-phospho-D-ribosyl)imidazole from N(2)-formyl-N(1)-(5-phospho-D-ribosyl)glycinamide: step 2/2. The polypeptide is Phosphoribosylformylglycinamidine cyclo-ligase (Streptococcus pyogenes serotype M12 (strain MGAS2096)).